The primary structure comprises 241 residues: tRNA (guanine-N(7)-)-methyltransferase (241 aa).

Positions 76, 101, 128, and 150 each coordinate S-adenosyl-L-methionine. Asp150 is an active-site residue. Residues Lys154, Asp186, and Thr219–Glu222 each bind substrate.

Belongs to the class I-like SAM-binding methyltransferase superfamily. TrmB family.

It carries out the reaction guanosine(46) in tRNA + S-adenosyl-L-methionine = N(7)-methylguanosine(46) in tRNA + S-adenosyl-L-homocysteine. Its pathway is tRNA modification; N(7)-methylguanine-tRNA biosynthesis. Its function is as follows. Catalyzes the formation of N(7)-methylguanine at position 46 (m7G46) in tRNA. The chain is tRNA (guanine-N(7)-)-methyltransferase from Cereibacter sphaeroides (strain ATCC 17023 / DSM 158 / JCM 6121 / CCUG 31486 / LMG 2827 / NBRC 12203 / NCIMB 8253 / ATH 2.4.1.) (Rhodobacter sphaeroides).